The sequence spans 54 residues: MSTATFVEIILAIILPPLGVFLKFGCKVEFWICLILTLFGYLPGILYALYIITK.

2 helical membrane-spanning segments follow: residues 2–22 (STAT…GVFL) and 32–52 (ICLI…LYII).

It belongs to the UPF0057 (PMP3) family.

Its subcellular location is the membrane. This is Hydrophobic protein RCI2B (RCI2B) from Arabidopsis thaliana (Mouse-ear cress).